A 187-amino-acid polypeptide reads, in one-letter code: ATP synthase subunit delta, chloroplastic (187 aa).

It belongs to the ATPase delta chain family. F-type ATPases have 2 components, F(1) - the catalytic core - and F(0) - the membrane proton channel. F(1) has five subunits: alpha(3), beta(3), gamma(1), delta(1), epsilon(1). CF(0) has four main subunits: a(1), b(1), b'(1) and c(10-14). The alpha and beta chains form an alternating ring which encloses part of the gamma chain. F(1) is attached to F(0) by a central stalk formed by the gamma and epsilon chains, while a peripheral stalk is formed by the delta, b and b' chains.

The protein localises to the plastid. It localises to the chloroplast thylakoid membrane. F(1)F(0) ATP synthase produces ATP from ADP in the presence of a proton or sodium gradient. F-type ATPases consist of two structural domains, F(1) containing the extramembraneous catalytic core and F(0) containing the membrane proton channel, linked together by a central stalk and a peripheral stalk. During catalysis, ATP synthesis in the catalytic domain of F(1) is coupled via a rotary mechanism of the central stalk subunits to proton translocation. In terms of biological role, this protein is part of the stalk that links CF(0) to CF(1). It either transmits conformational changes from CF(0) to CF(1) or is implicated in proton conduction. The polypeptide is ATP synthase subunit delta, chloroplastic (Trieres chinensis (Marine centric diatom)).